The sequence spans 234 residues: Large ribosomal subunit protein uL1 (234 aa).

Belongs to the universal ribosomal protein uL1 family. In terms of assembly, part of the 50S ribosomal subunit.

Its function is as follows. Binds directly to 23S rRNA. The L1 stalk is quite mobile in the ribosome, and is involved in E site tRNA release. Functionally, protein L1 is also a translational repressor protein, it controls the translation of the L11 operon by binding to its mRNA. This is Large ribosomal subunit protein uL1 from Anaeromyxobacter sp. (strain Fw109-5).